Consider the following 418-residue polypeptide: Light-independent protochlorophyllide reductase subunit N (418 aa).

[4Fe-4S] cluster-binding residues include cysteine 17, cysteine 42, and cysteine 103.

The protein belongs to the BchN/ChlN family. In terms of assembly, protochlorophyllide reductase is composed of three subunits; ChlL, ChlN and ChlB. Forms a heterotetramer of two ChlB and two ChlN subunits. [4Fe-4S] cluster serves as cofactor.

The catalysed reaction is chlorophyllide a + oxidized 2[4Fe-4S]-[ferredoxin] + 2 ADP + 2 phosphate = protochlorophyllide a + reduced 2[4Fe-4S]-[ferredoxin] + 2 ATP + 2 H2O. Its pathway is porphyrin-containing compound metabolism; chlorophyll biosynthesis (light-independent). Component of the dark-operative protochlorophyllide reductase (DPOR) that uses Mg-ATP and reduced ferredoxin to reduce ring D of protochlorophyllide (Pchlide) to form chlorophyllide a (Chlide). This reaction is light-independent. The NB-protein (ChlN-ChlB) is the catalytic component of the complex. This is Light-independent protochlorophyllide reductase subunit N from Prochlorococcus marinus (strain MIT 9215).